Here is a 99-residue protein sequence, read N- to C-terminus: Putative membrane protein insertion efficiency factor (99 aa).

This sequence belongs to the UPF0161 family.

The protein localises to the cell inner membrane. Functionally, could be involved in insertion of integral membrane proteins into the membrane. The protein is Putative membrane protein insertion efficiency factor of Salinibacter ruber (strain DSM 13855 / M31).